The sequence spans 338 residues: Adenylosuccinate synthetase (338 aa).

Residues 12-18 and 42-44 each bind GTP; these read GDEGKGK and GHT. Asp13 (proton acceptor) is an active-site residue. Asp13 and Gly42 together coordinate Mg(2+). Residues 13 to 16, 40 to 43, Thr127, Arg141, Gln179, Thr194, and Arg256 contribute to the IMP site; these read DEGK and NAGH. The active-site Proton donor is His43. Substrate is bound at residue 252-258; that stretch reads TVTGRRR. GTP-binding positions include Arg258, 284–286, and 324–326; these read CLD and STG.

Belongs to the adenylosuccinate synthetase family. Homodimer. It depends on Mg(2+) as a cofactor.

The protein resides in the cytoplasm. It catalyses the reaction IMP + L-aspartate + GTP = N(6)-(1,2-dicarboxyethyl)-AMP + GDP + phosphate + 2 H(+). It functions in the pathway purine metabolism; AMP biosynthesis via de novo pathway; AMP from IMP: step 1/2. Plays an important role in the de novo pathway of purine nucleotide biosynthesis. Catalyzes the first committed step in the biosynthesis of AMP from IMP. This is Adenylosuccinate synthetase from Methanococcus maripaludis (strain C7 / ATCC BAA-1331).